A 697-amino-acid chain; its full sequence is Elongation factor G (697 aa).

One can recognise a tr-type G domain in the interval 10 to 285 (EKTRNIGIVA…GVNDYLPSPL (276 aa)). GTP contacts are provided by residues 19-26 (AHIDAGKT), 83-87 (DTPGH), and 137-140 (NKMD).

Belongs to the TRAFAC class translation factor GTPase superfamily. Classic translation factor GTPase family. EF-G/EF-2 subfamily.

Its subcellular location is the cytoplasm. Functionally, catalyzes the GTP-dependent ribosomal translocation step during translation elongation. During this step, the ribosome changes from the pre-translocational (PRE) to the post-translocational (POST) state as the newly formed A-site-bound peptidyl-tRNA and P-site-bound deacylated tRNA move to the P and E sites, respectively. Catalyzes the coordinated movement of the two tRNA molecules, the mRNA and conformational changes in the ribosome. The sequence is that of Elongation factor G from Ligilactobacillus salivarius (strain UCC118) (Lactobacillus salivarius).